A 418-amino-acid polypeptide reads, in one-letter code: Inward rectifier potassium channel 16 (418 aa).

Residues 1 to 67 (MSYYGSSYHI…VVDIFTTLVD (67 aa)) are Cytoplasmic-facing. A helical transmembrane segment spans residues 68-94 (TKWRHMFVIFSLSYILSWLIFGSVFWL). Residues 95–117 (IAFHHGDLLNDPDITPCVDNVHS) lie on the Extracellular side of the membrane. Positions 118–134 (FTGAFLFSLETQTTIGY) form an intramembrane region, helical; Pore-forming. A Selectivity filter motif is present at residues 131-136 (TIGYGY). The Extracellular portion of the chain corresponds to 135 to 143 (GYRCVTEEC). Residues 144-171 (SVAVLMVILQSILSCIINTFIIGAALAK) form a helical membrane-spanning segment. Residues 172 to 418 (MATARKRAQT…LNRISVESQM (247 aa)) lie on the Cytoplasmic side of the membrane. Phosphoserine occurs at positions 373 and 375.

The protein belongs to the inward rectifier-type potassium channel (TC 1.A.2.1) family. KCNJ16 subfamily. It forms heteromeric channels with Kir4.1/KCNJ10; this interaction is required for KCNJ16 localization to the basolateral membrane in kidney cells. As a heteromer with KCNJ10, may interact with MAGI1; this interaction may facilitate KCNJ10/KCNJ16 potassium channel expression at the basolateral membrane in kidney cells. May form heteromers with Kir2.1/KCNJ2. Can form heteromeric channels with Kir4.2/KCNJ15. As to expression, widely expressed, with highest levels in adult and fetal kidney (at protein level). In the kidney, expressed in the proximal and distal convoluted tubules, but not in glomeruli nor collecting ducts.

It localises to the membrane. The protein localises to the basolateral cell membrane. The catalysed reaction is K(+)(in) = K(+)(out). Channel activity is strongly regulated by variations of cytosolic pH; channels are activated by alkaline and inhibited by acidic pH values. Activated by phosphatidylinositol 4,5 biphosphate (PtdIns(4,5)P2). Inward rectifier potassium channels are characterized by a greater tendency to allow potassium to flow into the cell rather than out of it. Their voltage dependence is regulated by the concentration of extracellular potassium; as external potassium is raised, the voltage range of the channel opening shifts to more positive voltages. The inward rectification is mainly due to the blockage of outward current by internal magnesium. KCNJ16 may be involved in the regulation of fluid and pH balance. In the kidney, together with KCNJ10, mediates basolateral K(+) recycling in distal tubules; this process is critical for Na(+) reabsorption at the tubules. In Homo sapiens (Human), this protein is Inward rectifier potassium channel 16 (KCNJ16).